Reading from the N-terminus, the 279-residue chain is Glycerol uptake facilitator protein (279 aa).

The Cytoplasmic segment spans residues 1–8; that stretch reads MTTAAPTP. A helical membrane pass occupies residues 9–37; the sequence is SLFGQCLAEFLGTALLIFFGTGCVAALKV. The Periplasmic portion of the chain corresponds to 38-42; it reads AGASF. Residues 43-63 form a helical membrane-spanning segment; it reads GLWEISIIWGVGVSMAIYLSA. The Cytoplasmic portion of the chain corresponds to 64–66; it reads GVS. Residues 67–70 lie within the membrane without spanning it; it reads GAHL. The NPA 1 motif lies at 71 to 73; sequence NPA. An intramembrane region (helical) is located at residues 71–81; that stretch reads NPAVSIALWLF. Residues 82 to 87 lie on the Cytoplasmic side of the membrane; sequence AGFEGR. Residues 88 to 111 traverse the membrane as a helical segment; the sequence is KLPFYITAQVAGAFCAAALVYTLY. Topologically, residues 112–146 are periplasmic; it reads SSLFIEFEQAQNIVRGSQDSLALASVFSTYPHPAL. The helical transmembrane segment at 147 to 172 threads the bilayer; the sequence is SVGQAFLVEVVITAILMAVIMALTDD. The Cytoplasmic portion of the chain corresponds to 173-180; the sequence is GNGLPRGP. Residues 181–197 traverse the membrane as a helical segment; it reads LAPLLIGLLIAVIGSAM. Over 198 to 201 the chain is Periplasmic; it reads GPLT. Residues 202 to 205 lie within the membrane without spanning it; sequence GFAM. An NPA 2 motif is present at residues 206–208; it reads NPA. Positions 206 to 219 form an intramembrane region, helical; it reads NPARDFGPKLMTYL. Residues 220–234 lie on the Periplasmic side of the membrane; sequence AGWGPIAFTGGREIP. A helical transmembrane segment spans residues 235–257; the sequence is YFLVPIFAPILGACLGAGGYRVL. Over 258–279 the chain is Cytoplasmic; sequence IARHLPSAAAPAEAEPEKVRAS.

Belongs to the MIP/aquaporin (TC 1.A.8) family.

It is found in the cell inner membrane. It carries out the reaction glycerol(in) = glycerol(out). Functionally, mediates glycerol diffusion across the cytoplasmic membrane via a pore-type mechanism. The sequence is that of Glycerol uptake facilitator protein (glpF) from Pseudomonas aeruginosa (strain ATCC 15692 / DSM 22644 / CIP 104116 / JCM 14847 / LMG 12228 / 1C / PRS 101 / PAO1).